The sequence spans 353 residues: Protein pelota homolog (353 aa).

The protein belongs to the eukaryotic release factor 1 family. Pelota subfamily. In terms of assembly, monomer. A divalent metal cation is required as a cofactor.

The protein resides in the cytoplasm. May function in recognizing stalled ribosomes, interact with stem-loop structures in stalled mRNA molecules, and effect endonucleolytic cleavage of the mRNA. May play a role in the release non-functional ribosomes and degradation of damaged mRNAs. Has endoribonuclease activity. This is Protein pelota homolog from Methanobrevibacter smithii (strain ATCC 35061 / DSM 861 / OCM 144 / PS).